The following is a 128-amino-acid chain: Small ribosomal subunit protein uS9 (128 aa).

It belongs to the universal ribosomal protein uS9 family.

This Christiangramia forsetii (strain DSM 17595 / CGMCC 1.15422 / KT0803) (Gramella forsetii) protein is Small ribosomal subunit protein uS9.